Consider the following 306-residue polypeptide: Serrate RNA effector molecule homolog (306 aa).

The disordered stretch occupies residues 1–28 (HKEEELLGSSGGPPPEEPPKEGNPAEIN). Threonine 101 bears the Phosphothreonine mark. Serine 109 is modified (phosphoserine). Positions 251-284 (GPPYPHGPYGAGRGNYDAFRGQGGYPGKPRNRMV) are disordered. Residues arginine 263, arginine 270, and arginine 280 each carry the omega-N-methylarginine modification.

This sequence belongs to the ARS2 family. Interacts with CASP8AP2, ERBB4, NCBP1/CBP80 and DROSHA. Interacts with LUZP4. Interacts with NCBP2/CBP20 and NCBP3.

It localises to the nucleus. The protein localises to the nucleoplasm. Its subcellular location is the cytoplasm. Acts as a mediator between the cap-binding complex (CBC) and the primary microRNAs (miRNAs) processing machinery during cell proliferation. Contributes to the stability and delivery of capped primary miRNA transcripts to the primary miRNA processing complex containing DGCR8 and DROSHA, thereby playing a role in RNA-mediated gene silencing (RNAi) by miRNAs. Binds capped RNAs (m7GpppG-capped RNA); however interaction is probably mediated via its interaction with NCBP1/CBP80 component of the CBC complex. Involved in cell cycle progression at S phase. Does not directly confer arsenite resistance but rather modulates arsenic sensitivity. Independently of its activity on miRNAs, necessary and sufficient to promote neural stem cell self-renewal. Does so by directly binding SOX2 promoter and positively regulating its transcription. This is Serrate RNA effector molecule homolog (SRRT) from Cricetulus griseus (Chinese hamster).